The sequence spans 375 residues: Trichodiene synthase (375 aa).

The protein belongs to the trichodiene synthase family.

It catalyses the reaction (2E,6E)-farnesyl diphosphate = trichodiene + diphosphate. The protein operates within sesquiterpene biosynthesis; trichothecene biosynthesis. TS is a member of the terpene cyclase group of enzymes. It catalyzes the isomerization and cyclization of farnesyl pyro-phosphate to form trichodiene, the first cyclic intermediate in the biosynthetic pathway for trichothecenes. It serves to branch trichothecene biosynthesis from the isoprenoid pathway. This chain is Trichodiene synthase (TRI5), found in Fusarium culmorum.